Consider the following 367-residue polypeptide: MVAVLTWALALLSAFATVQTQKGFWDYFSQSSGDKSKVARVQQQKLTWEPTSLKDSLEQDLSNMDKFLEKLGPLSGQGREPPGLPHDPEGMRQQLQEELAEVRARLEPYMAEAHQQVGWNLEGLRRQLKPYTVELMEQVARRVQELQEQLRVVGEGTKAQLLGGVDEARGLLQELQTRVVQHTGRVRELFHPYAQRLVTGIGRHVQELHRSVAPHAAASSARLSRCVQTLSRKLTLKAEALHARIQQNLDQLLEELSAFASAGAGGAEEGANSGPQMLSQEVRQRLQAFRHDTFVQIADFTRAIDQETEEVQLQLAPPPPGHSAFAPEFLQADSSEARSKLQARLEDLWEDINDSLHDRGLSHLEEP.

Positions 1–20 are cleaved as a signal peptide; sequence MVAVLTWALALLSAFATVQT. S56 carries the post-translational modification Phosphoserine. Residues 71-90 are disordered; that stretch reads LGPLSGQGREPPGLPHDPEG.

Belongs to the apolipoprotein A1/A4/E family. In terms of assembly, interacts with GPIHBP1. Interacts with SORL1; this interaction leads to APOA5 internalization and sorting either to lysosomes and degradation, or to the trans-Golgi network. Post-translationally, phosphorylated by FAM20C in the extracellular medium.

Its subcellular location is the secreted. It is found in the early endosome. It localises to the late endosome. The protein resides in the golgi apparatus. The protein localises to the trans-Golgi network. Functionally, minor apolipoprotein mainly associated with HDL and to a lesser extent with VLDL. May also be associated with chylomicrons. Important determinant of plasma triglyceride (TG) levels by both being a potent stimulator of apo-CII lipoprotein lipase (LPL) TG hydrolysis and an inhibitor of the hepatic VLDL-TG production rate (without affecting the VLDL-apoB production rate). Activates poorly lecithin:cholesterol acyltransferase (LCAT) and does not enhance efflux of cholesterol from macrophages. Binds heparin. The sequence is that of Apolipoprotein A-V (APOA5) from Leptonychotes weddellii (Weddell seal).